The following is a 69-amino-acid chain: Photosystem I reaction center subunit IV (69 aa).

The protein belongs to the PsaE family.

Its subcellular location is the cellular thylakoid membrane. Stabilizes the interaction between PsaC and the PSI core, assists the docking of the ferredoxin to PSI and interacts with ferredoxin-NADP oxidoreductase. In Prochlorococcus marinus (strain MIT 9215), this protein is Photosystem I reaction center subunit IV.